Consider the following 864-residue polypeptide: 3-O-alpha-D-mannopyranosyl-alpha-D-mannopyranose xylosylphosphotransferase (864 aa).

The tract at residues 1-66 (MPSTALSPPS…VPPRSPSRKI (66 aa)) is disordered. Residues 1-82 (MPSTALSPPS…HIRPHITPRT (82 aa)) lie on the Cytoplasmic side of the membrane. 2 stretches are compositionally biased toward low complexity: residues 16-29 (SYDS…PSSP) and 42-52 (SPSPSRLESLL). Residues 83 to 103 (LTPVFLWTLALWLIHHFLFPL) form a helical membrane-spanning segment. Over 104–864 (SSPFAKLAKP…WDPVKDRYND (761 aa)) the chain is Lumenal. Residues asparagine 200, asparagine 301, and asparagine 583 are each glycosylated (N-linked (GlcNAc...) asparagine).

This sequence belongs to the XPT1 family. Mn(2+) is required as a cofactor.

Its subcellular location is the golgi apparatus membrane. It catalyses the reaction 3-alpha-D-mannopyranosyl-alpha-D-mannopyranose + UDP-alpha-D-xylose = 3-O-(6-O-alpha-D-xylosylphospho-alpha-D-mannopyranosyl)-alpha-D-mannopyranose + UMP + H(+). In terms of biological role, xylosylphosphotransferase that is specific for UDP-xylose as a donor and mannose as an acceptor to form a xylose-alpha-1-phosphate-6-mannose linkage. Functions in the O-glycosylation of proteins en route through the secretory pathway. This Cryptococcus neoformans var. grubii (Filobasidiella neoformans var. grubii) protein is 3-O-alpha-D-mannopyranosyl-alpha-D-mannopyranose xylosylphosphotransferase (XPT1).